A 322-amino-acid polypeptide reads, in one-letter code: Dirigent protein 9 (322 aa).

The first 20 residues, 1–20 (MAKALHITIFLFLISSNLLA), serve as a signal peptide directing secretion.

It belongs to the plant dirigent protein family. Homodimer.

Its subcellular location is the secreted. It is found in the extracellular space. It localises to the apoplast. Dirigent proteins impart stereoselectivity on the phenoxy radical-coupling reaction, yielding optically active lignans from two molecules of coniferyl alcohol in the biosynthesis of lignans, flavonolignans, and alkaloids and thus plays a central role in plant secondary metabolism. This is Dirigent protein 9 (DIR9) from Arabidopsis thaliana (Mouse-ear cress).